The chain runs to 377 residues: Nitric oxide reductase FlRd-NAD(+) reductase (377 aa).

The protein belongs to the FAD-dependent oxidoreductase family. It depends on FAD as a cofactor.

The protein localises to the cytoplasm. The catalysed reaction is 2 reduced [nitric oxide reductase rubredoxin domain] + NAD(+) + H(+) = 2 oxidized [nitric oxide reductase rubredoxin domain] + NADH. It participates in nitrogen metabolism; nitric oxide reduction. In terms of biological role, one of at least two accessory proteins for anaerobic nitric oxide (NO) reductase. Reduces the rubredoxin moiety of NO reductase. The polypeptide is Nitric oxide reductase FlRd-NAD(+) reductase (Enterobacter sp. (strain 638)).